Here is a 396-residue protein sequence, read N- to C-terminus: L-cysteine desulfidase (396 aa).

The active-site Proton acceptor is the Cys-23. [4Fe-4S] cluster-binding residues include Cys-287, Cys-329, and Cys-336.

It belongs to the L-cysteine desulfidase family. Homotrimer. [4Fe-4S] cluster is required as a cofactor.

It catalyses the reaction L-cysteine + H2O = hydrogen sulfide + pyruvate + NH4(+) + H(+). Functionally, catalyzes the cleavage of L-cysteine to form 2-aminoprop-2-enoate and sulfide. The former then spontaneously hydrolyzes to pyruvate and NH(3). May be responsible for the production of sulfide required for the biosynthesis of iron-sulfur centers in this archaea. The polypeptide is L-cysteine desulfidase (Methanococcus maripaludis (strain DSM 14266 / JCM 13030 / NBRC 101832 / S2 / LL)).